The primary structure comprises 393 residues: Glutamate 5-kinase 1 (393 aa).

Lys17 provides a ligand contact to ATP. Substrate-binding residues include Ser57, Asp144, and Asn156. 176–177 is an ATP binding site; the sequence is SD. In terms of domain architecture, PUA spans 282–359; that stretch reads AGSLSIDAGA…AEIAAILGYA (78 aa).

It belongs to the glutamate 5-kinase family.

It localises to the cytoplasm. The catalysed reaction is L-glutamate + ATP = L-glutamyl 5-phosphate + ADP. It participates in amino-acid biosynthesis; L-proline biosynthesis; L-glutamate 5-semialdehyde from L-glutamate: step 1/2. In terms of biological role, catalyzes the transfer of a phosphate group to glutamate to form L-glutamate 5-phosphate. This chain is Glutamate 5-kinase 1, found in Rhizobium meliloti (strain 1021) (Ensifer meliloti).